The chain runs to 1020 residues: Inner tegument protein (1020 aa).

The interaction with large tegument protein stretch occupies residues 539-1020; the sequence is WGVRIPDRDT…EIDAIFNNTK (482 aa).

This sequence belongs to the herpesviridae inner tegument protein family. In terms of assembly, interacts (via C-terminus) with the large tegument protein/LTP (via N-terminus).

It localises to the virion tegument. The protein resides in the host cytoplasm. It is found in the host nucleus. Its subcellular location is the host Golgi apparatus. The protein localises to the host trans-Golgi network. Functionally, plays an essential role in cytoplasmic secondary envelopment during viral egress. Interacts with the capsid via the large tegument protein/LTP and participates in its transport to the host trans-Golgi network (TGN) where secondary envelopment occurs. Modulates tegumentation and capsid accumulation at the viral assembly complex. The protein is Inner tegument protein of Equine herpesvirus 1 (strain Ab4p) (EHV-1).